A 616-amino-acid chain; its full sequence is ATP-dependent RNA helicase VAD1 (616 aa).

The segment at 1-35 is disordered; the sequence is MASSSTLANDDWKQGLAAPPKDLRPQTEDVTATQG. The Q motif motif lies at 36-64; that stretch reads SRFEDFGLRRELLMGIYTAGFERPSPIQE. Residues 67–238 form the Helicase ATP-binding domain; the sequence is IPMALTGRDI…DQHMVQPYEI (172 aa). An ATP-binding site is contributed by 80–87; sequence AKNGTGKT. Positions 186-189 match the DEAD box motif; it reads DEAD. The region spanning 248 to 408 is the Helicase C-terminal domain; that stretch reads GVTQYYAYVE…PIPAVIDPVL (161 aa). A disordered region spans residues 416 to 616; the sequence is EEERESPPPK…GASQSQQAQA (201 aa). 3 stretches are compositionally biased toward low complexity: residues 427–441, 458–500, and 508–523; these read AAIAAPPAQQQPQQR, PAAA…NSSP, and YPQQAPTQAQGPAQMQ. A compositionally biased stretch (polar residues) spans 529-545; the sequence is PATQPQASAQIPVQGQT. Low complexity-rich tracts occupy residues 550–579 and 606–616; these read PRAQQQGQQQPSQPGQAEGQSQPNRRPNTG and AGASQSQQAQA.

The protein belongs to the DEAD box helicase family. DDX6/DHH1 subfamily.

The protein resides in the cytoplasm. The protein localises to the P-body. It catalyses the reaction ATP + H2O = ADP + phosphate + H(+). In terms of biological role, ATP-dependent RNA helicase involved in mRNA turnover, and more specifically in mRNA decapping. Is involved in G1/S DNA-damage checkpoint recovery, probably through the regulation of the translational status of a subset of mRNAs. May also have a role in translation and mRNA nuclear export. Blocks autophagy in nutrient-rich conditions by, at least partly, binding and repressing the expression of a set of ATG genes, including ATG3, ATG7, ATG8, ATG19, ATG20 and ATG22. VAD1-mediated repression of autophagy is regulated by TOR-dependent phosphorylation of the decapping enzyme DCP2. Regulates multiple virulence-associated genes. Repression of autophagy by VAD1 also regulates the pathogenesis. In Cryptococcus neoformans var. grubii serotype A (strain H99 / ATCC 208821 / CBS 10515 / FGSC 9487) (Filobasidiella neoformans var. grubii), this protein is ATP-dependent RNA helicase VAD1.